The primary structure comprises 350 residues: Palmitoyltransferase erf2 (350 aa).

Topologically, residues 1–86 (MSYEKHSDAK…RLQMSSQYKA (86 aa)) are cytoplasmic. The helical transmembrane segment at 87 to 107 (FLISLFALILPGVLFFIFSAF) threads the bilayer. Residues 108-112 (WLWHH) are Lumenal-facing. The chain crosses the membrane as a helical span at residues 113-133 (VSPAVPITFAYLYALAVVSMF). The Cytoplasmic segment spans residues 134-225 (KCSTADPGIL…NTCIGRRNYR (92 aa)). Residues 182 to 232 (VYCHTCHLYRPPRASHCHLCDNCVEYLDHHCIWLNTCIGRRNYRYYFIFLL) form the DHHC domain. Residue C212 is the S-palmitoyl cysteine intermediate of the active site. A helical membrane pass occupies residues 226 to 246 (YYFIFLLSVVLSALYLTGLGF). Residues 247 to 270 (YTSIGSFHESTDTNFAAHLRRPWA) lie on the Lumenal side of the membrane. The chain crosses the membrane as a helical span at residues 271–291 (GVSFFLGIYGALGAILPGILF). Residues 292–350 (CYQCYLISVGQNVHEYLRAKSTETEDVHPFHDSIWLNFLVVLCRPKNVSYVRPTRKSYV) are Cytoplasmic-facing.

The protein belongs to the DHHC palmitoyltransferase family. ERF2/ZDHHC9 subfamily. As to quaternary structure, interacts with erf4. Post-translationally, autopalmitoylated.

It is found in the endoplasmic reticulum membrane. Its subcellular location is the golgi apparatus. The protein localises to the golgi stack membrane. It catalyses the reaction L-cysteinyl-[protein] + hexadecanoyl-CoA = S-hexadecanoyl-L-cysteinyl-[protein] + CoA. In terms of biological role, the erf2-erf4 complex is a palmitoyltransferase with a major role in driving sexual development. Palmitoylates ras1. Palmitoylates isp3. Palmitoylates rho3. The sequence is that of Palmitoyltransferase erf2 from Schizosaccharomyces pombe (strain 972 / ATCC 24843) (Fission yeast).